Consider the following 370-residue polypeptide: MSNKDTRVVVGMSGGVDSSVTAHILKEQGYDVIGIFMKNWDNTDENGYCTATEDYNDVIAVCNQIGIPYYAVNFEKEYWDKVFTYFLDEYKKGRTPNPDVMCNKEIKFKAFLEHALKLGADYVATGHYARVRRHEDGHVEMLRGVDNNKDQTYFLNQLSQSQLSRVMFPIGDIEKKEVRRIAEEQDLATAKKKDSTGICFIGERNFKEFLSQYLPAQSGEMRTLKGEKIGTHAGLMYYTIGQRHGLGIGGDGDPWFVVGKNLDDNILYVEQGFHHDALYSDYLIASDISFVNDVDLENGFECTAKFRYRQKDTKVFVKNENENAIRVIFNEPVRAITPGQSVVLYDGDVCLGGATIDDVYKESGQLSYVV.

Residues 11-18 and M37 each bind ATP; that span reads GMSGGVDS. The interval 97–99 is interaction with target base in tRNA; it reads NPD. The Nucleophile role is filled by C102. A disulfide bond links C102 and C199. G126 is a binding site for ATP. The interval 149–151 is interaction with tRNA; that stretch reads KDQ. C199 (cysteine persulfide intermediate) is an active-site residue. Positions 307–308 are interaction with tRNA; the sequence is RY.

The protein belongs to the MnmA/TRMU family.

It is found in the cytoplasm. It catalyses the reaction S-sulfanyl-L-cysteinyl-[protein] + uridine(34) in tRNA + AH2 + ATP = 2-thiouridine(34) in tRNA + L-cysteinyl-[protein] + A + AMP + diphosphate + H(+). Its function is as follows. Catalyzes the 2-thiolation of uridine at the wobble position (U34) of tRNA, leading to the formation of s(2)U34. The sequence is that of tRNA-specific 2-thiouridylase MnmA from Staphylococcus saprophyticus subsp. saprophyticus (strain ATCC 15305 / DSM 20229 / NCIMB 8711 / NCTC 7292 / S-41).